A 1365-amino-acid polypeptide reads, in one-letter code: Histone-lysine N-methyltransferase NSD2 (1365 aa).

Residues Thr-110 and Thr-114 each carry the phosphothreonine modification. Ser-121 carries the phosphoserine modification. The interval 149-170 is disordered; that stretch reads ADVSQSEENGQKPENKARRNRK. Ser-172 is subject to Phosphoserine. The PWWP 1 domain maps to 222 to 286; the sequence is VGDLVWSKVS…FEKSLVAFEG (65 aa). At Ser-376 the chain carries Phosphoserine. Disordered regions lie at residues 376–455 and 516–658; these read SSGV…RKGD and EDSG…SKKS. Thr-422 carries the post-translational modification Phosphothreonine. Residues 453–521 constitute a DNA-binding region (HMG box); the sequence is KGDAASQFLV…VQAEEDSGNV (69 aa). Thr-544 is subject to Phosphothreonine. Residues 552–567 show a composition bias toward basic and acidic residues; the sequence is DKHSLRKRDTITDKTA. Residues 580 to 590 are compositionally biased toward polar residues; the sequence is SLKSQAATKNL. The span at 606 to 622 shows a compositional bias: low complexity; the sequence is AASSALGFSKSSSPSAS. Ser-614 carries the phosphoserine modification. Positions 632–648 are enriched in acidic residues; the sequence is PGDEPSESPYESADETQ. 3 consecutive PHD-type zinc fingers follow at residues 667–713, 714–770, and 831–875; these read EYVC…CASG, IHSC…CHAS, and VSWC…CRAG. Positions 880–942 constitute a PWWP 2 domain; it reads FQDIIWVKLG…QARVFPYMEG (63 aa). An AWS domain is found at 1011–1061; it reads SEIPKCNCKPTDENPCGFDSECLNRMLMFECHPQVCPAGEFCQNQCFTKRQ. Zn(2+)-binding residues include Cys-1016, Cys-1018, Cys-1026, Cys-1032, Cys-1041, Cys-1046, and Cys-1052. The 118-residue stretch at 1063–1180 folds into the SET domain; sequence PETKIIKTDG…AGTELTFNYN (118 aa). S-adenosyl-L-methionine is bound by residues Trp-1075, 1115-1118, and 1141-1142; these read THFY and NH. Cys-1144 provides a ligand contact to Zn(2+). Residue Asn-1186 participates in S-adenosyl-L-methionine binding. In terms of domain architecture, Post-SET spans 1187–1203; it reads EKTVCRCGASNCSGFLG. Cys-1191 serves as a coordination point for Zn(2+). Arg-1192 lines the S-adenosyl-L-methionine pocket. Residues Cys-1193 and Cys-1198 each coordinate Zn(2+). Residues 1207–1232 are disordered; the sequence is KTSTTLSSEEKGKKTKKKTRRRRAKG. Residues 1219–1230 are compositionally biased toward basic residues; sequence KKTKKKTRRRRA. The PHD-type 4; atypical zinc finger occupies 1239 to 1286; that stretch reads EDECFRCGDGGQLVLCDRKFCTKAYHLSCLGLGKRPFGKWECPWHHCD. Residues 1333–1365 form a disordered region; it reads VRSTKTEKPPPEPGKPKGKRRRRRGWRRVTEGK. Residues 1348–1359 show a composition bias toward basic residues; that stretch reads PKGKRRRRRGWR.

This sequence belongs to the class V-like SAM-binding methyltransferase superfamily. Histone-lysine methyltransferase family. SET2 subfamily. In terms of assembly, interacts with HDAC1. Interacts (via PHD-type zinc fingers 1, 2 and 3) with SALL1. Interacts (via PHD-type 1, 2 and 3) with SALL4. Interacts with NANOG. Interacts with OGT. Interacts (via HMG box) with NKX2-5. As to expression, widely expressed. Predominantly expressed in thymus and testis.

The protein localises to the nucleus. The protein resides in the chromosome. Its subcellular location is the cytoplasm. It localises to the nucleolus. It carries out the reaction L-lysyl(36)-[histone H3] + S-adenosyl-L-methionine = N(6)-methyl-L-lysyl(36)-[histone H3] + S-adenosyl-L-homocysteine + H(+). It catalyses the reaction L-lysyl(36)-[histone H3] + 2 S-adenosyl-L-methionine = N(6),N(6)-dimethyl-L-lysyl(36)-[histone H3] + 2 S-adenosyl-L-homocysteine + 2 H(+). Histone methyltransferase which specifically dimethylates nucleosomal histone H3 at 'Lys-36' (H3K36me2). Also monomethylates nucleosomal histone H3 at 'Lys-36' (H3K36me) in vitro. Does not trimethylate nucleosomal histone H3 at 'Lys-36' (H3K36me3). However, specifically trimethylates histone H3 at 'Lys-36' (H3K36me3) at euchromatic regions in embryonic stem (ES) cells. By methylating histone H3 at 'Lys-36', involved in the regulation of gene transcription during various biological processes. In ES cells, associates with developmental transcription factors such as SALL1 and represses inappropriate gene transcription mediated by histone deacetylation. During heart development, associates with transcription factor NKX2-5 to repress transcription of NKX2-5 target genes. Plays an essential role in adipogenesis, by regulating expression of genes involved in pre-adipocyte differentiation. During T-cell receptor (TCR) and CD28-mediated T-cell activation, promotes the transcription of transcription factor BCL6 which is required for follicular helper T (Tfh) cell differentiation. During B-cell development, required for the generation of the B1 lineage. During B2 cell activation, may contribute to the control of isotype class switch recombination (CRS), splenic germinal center formation, and the humoral immune response. Plays a role in class switch recombination of the immunoglobulin heavy chain (IgH) locus during B-cell activation. By regulating the methylation of histone H3 at 'Lys-36' and histone H4 at 'Lys-20' at the IgH locus, involved in TP53BP1 recruitment to the IgH switch region and promotes the transcription of IgA. Its function is as follows. Histone methyltransferase which specifically dimethylates nucleosomal histone H3 at 'Lys-36' (H3K36me2). Functionally, histone methyltransferase which specifically dimethylates nucleosomal histone H3 at 'Lys-36' (H3K36me2). Methylation of histone H3 at 'Lys-27' is controversial. Mono-, di- or tri-methylates histone H3 at 'Lys-27' (H3K27me, H3K27me2 and H3K27me3). Does not methylate histone H3 at 'Lys-27'. May act as a transcription regulator that binds DNA and suppresses IL5 transcription through HDAC recruitment. In Homo sapiens (Human), this protein is Histone-lysine N-methyltransferase NSD2.